We begin with the raw amino-acid sequence, 474 residues long: Cysteine--tRNA ligase (474 aa).

Residue cysteine 34 participates in Zn(2+) binding. The 'HIGH' region signature appears at 36–46 (PTVYDYAHIGN). 3 residues coordinate Zn(2+): cysteine 219, histidine 244, and glutamate 248. Residues 276–280 (KMSKS) carry the 'KMSKS' region motif. Residue lysine 279 participates in ATP binding.

This sequence belongs to the class-I aminoacyl-tRNA synthetase family. Monomer. Zn(2+) serves as cofactor.

The protein localises to the cytoplasm. The catalysed reaction is tRNA(Cys) + L-cysteine + ATP = L-cysteinyl-tRNA(Cys) + AMP + diphosphate. In Chlamydia pneumoniae (Chlamydophila pneumoniae), this protein is Cysteine--tRNA ligase (cysS).